Here is a 345-residue protein sequence, read N- to C-terminus: N-acetyl-gamma-glutamyl-phosphate reductase (345 aa).

Residue cysteine 149 is part of the active site.

It belongs to the NAGSA dehydrogenase family. Type 1 subfamily.

It localises to the cytoplasm. It catalyses the reaction N-acetyl-L-glutamate 5-semialdehyde + phosphate + NADP(+) = N-acetyl-L-glutamyl 5-phosphate + NADPH + H(+). It participates in amino-acid biosynthesis; L-arginine biosynthesis; N(2)-acetyl-L-ornithine from L-glutamate: step 3/4. Functionally, catalyzes the NADPH-dependent reduction of N-acetyl-5-glutamyl phosphate to yield N-acetyl-L-glutamate 5-semialdehyde. This chain is N-acetyl-gamma-glutamyl-phosphate reductase, found in Halalkalibacterium halodurans (strain ATCC BAA-125 / DSM 18197 / FERM 7344 / JCM 9153 / C-125) (Bacillus halodurans).